The chain runs to 456 residues: Smoothelin-like protein 2 (456 aa).

A coiled-coil region spans residues 24–88 (LEGAVRALHE…RQVEALGLAT (65 aa)). Thr96 bears the Phosphothreonine mark. A phosphoserine mark is found at Ser98, Ser126, and Ser131. Over residues 120–129 (HATFSLSGRS) the composition is skewed to polar residues. 3 disordered regions span residues 120 to 140 (HATFSLSGRSPSVEHDEASDL), 154 to 190 (GHQLDAGPANGSSEVQTSSAQEPPRPRPVSLSLRMPH), and 220 to 310 (VGGF…GAQA). The span at 131–140 (SVEHDEASDL) shows a compositional bias: basic and acidic residues. The span at 163–174 (NGSSEVQTSSAQ) shows a compositional bias: polar residues. Over residues 242–251 (SSSFTRSLSG) the composition is skewed to low complexity. Phosphoserine occurs at positions 250, 252, and 265. A compositionally biased stretch (pro residues) spans 268-279 (LVTPPQSPPSSQ). Thr270 carries the phosphothreonine modification. A Phosphoserine modification is found at Ser274. Over residues 298 to 308 (RSQTLPRTSGA) the composition is skewed to polar residues. At Ser339 the chain carries Phosphoserine. Positions 346–453 (SSIKQILLEW…YVQSLYNHLR (108 aa)) constitute a Calponin-homology (CH) domain.

This sequence belongs to the smoothelin family.

The polypeptide is Smoothelin-like protein 2 (Smtnl2) (Mus musculus (Mouse)).